Consider the following 208-residue polypeptide: Small ribosomal subunit protein uS4 (208 aa).

Residues 98–159 enclose the S4 RNA-binding domain; it reads RRLDNVVYRL…KSRKIVSIND (62 aa).

The protein belongs to the universal ribosomal protein uS4 family. In terms of assembly, part of the 30S ribosomal subunit. Contacts protein S5. The interaction surface between S4 and S5 is involved in control of translational fidelity.

Functionally, one of the primary rRNA binding proteins, it binds directly to 16S rRNA where it nucleates assembly of the body of the 30S subunit. In terms of biological role, with S5 and S12 plays an important role in translational accuracy. The chain is Small ribosomal subunit protein uS4 from Pelobacter propionicus (strain DSM 2379 / NBRC 103807 / OttBd1).